Consider the following 100-residue polypeptide: Small ribosomal subunit protein uS14c (100 aa).

The protein belongs to the universal ribosomal protein uS14 family. Part of the 30S ribosomal subunit.

It localises to the plastid. The protein localises to the chloroplast. In terms of biological role, binds 16S rRNA, required for the assembly of 30S particles. The polypeptide is Small ribosomal subunit protein uS14c (Oltmannsiellopsis viridis (Marine flagellate)).